A 548-amino-acid polypeptide reads, in one-letter code: Membrane protein insertase YidC (548 aa).

The helical transmembrane segment at 6–26 (NLLVIALLFVSFMIWQAWEQD) threads the bilayer. The interval 28-54 (NPQPQTQQTTQTTTTAAGSAADQGVPA) is disordered. Residues 29 to 42 (PQPQTQQTTQTTTT) are compositionally biased toward low complexity. Helical transmembrane passes span 350 to 370 (FLGN…GIMY), 424 to 444 (FPLI…MGSI), 458 to 478 (LSAQ…MFFI), and 499 to 519 (PVIF…YYIV).

It belongs to the OXA1/ALB3/YidC family. Type 1 subfamily. As to quaternary structure, interacts with the Sec translocase complex via SecD. Specifically interacts with transmembrane segments of nascent integral membrane proteins during membrane integration.

It is found in the cell inner membrane. Required for the insertion and/or proper folding and/or complex formation of integral membrane proteins into the membrane. Involved in integration of membrane proteins that insert both dependently and independently of the Sec translocase complex, as well as at least some lipoproteins. Aids folding of multispanning membrane proteins. This chain is Membrane protein insertase YidC, found in Citrobacter koseri (strain ATCC BAA-895 / CDC 4225-83 / SGSC4696).